Consider the following 241-residue polypeptide: Neuromodulin (241 aa).

Over residues 1–26 (TKQVEKNEDGDQKIEQDGIKPEDKAH) the composition is skewed to basic and acidic residues. Residues 1–241 (TKQVEKNEDG…EESKADQENA (241 aa)) form a disordered region. An IQ domain is found at 25–54 (AHKAATKIQASFRGHITRKKLKGEKKGDAP). Composition is skewed to low complexity over residues 80–95 (APAA…AQQE) and 118–131 (SEQP…PAAS). Composition is skewed to basic and acidic residues over residues 132 to 147 (SEEK…REST) and 159 to 171 (KADE…EPKQ). Low complexity predominate over residues 172 to 198 (ADVPAADTTATTTPAAEDATAKATAQP). 2 stretches are compositionally biased toward basic and acidic residues: residues 208–220 (TEEK…ETKP) and 232–241 (EESKADQENA).

This sequence belongs to the neuromodulin family. As to quaternary structure, binds calmodulin with a greater affinity in the absence of Ca(2+) than in its presence. Post-translationally, palmitoylated. Palmitoylation is essential for plasma membrane association.

Its subcellular location is the cell membrane. The protein localises to the cell projection. The protein resides in the growth cone membrane. It localises to the synapse. It is found in the filopodium membrane. In terms of biological role, this protein is associated with nerve growth. It is a major component of the motile 'growth cones' that form the tips of elongating axons. Plays a role in axonal and dendritic filopodia induction. This chain is Neuromodulin (GAP43), found in Serinus canaria (Island canary).